Reading from the N-terminus, the 232-residue chain is ATP phosphoribosyltransferase (232 aa).

Belongs to the ATP phosphoribosyltransferase family. Short subfamily. Heteromultimer composed of HisG and HisZ subunits.

Its subcellular location is the cytoplasm. The catalysed reaction is 1-(5-phospho-beta-D-ribosyl)-ATP + diphosphate = 5-phospho-alpha-D-ribose 1-diphosphate + ATP. It participates in amino-acid biosynthesis; L-histidine biosynthesis; L-histidine from 5-phospho-alpha-D-ribose 1-diphosphate: step 1/9. Functionally, catalyzes the condensation of ATP and 5-phosphoribose 1-diphosphate to form N'-(5'-phosphoribosyl)-ATP (PR-ATP). Has a crucial role in the pathway because the rate of histidine biosynthesis seems to be controlled primarily by regulation of HisG enzymatic activity. The protein is ATP phosphoribosyltransferase (hisG) of Mesorhizobium japonicum (strain LMG 29417 / CECT 9101 / MAFF 303099) (Mesorhizobium loti (strain MAFF 303099)).